The chain runs to 513 residues: Steroid (22S)-hydroxylase (513 aa).

Residues 8–28 (TLLPLLLLPSLLSLLLFLILL) traverse the membrane as a helical segment. Residues 252–277 (DIKEEDQEEEEVKTEDEAEMSKSDHV) form a disordered region. The segment covering 254 to 269 (KEEDQEEEEVKTEDEA) has biased composition (acidic residues). Residue Cys462 coordinates heme.

It belongs to the cytochrome P450 family. The cofactor is heme. Expressed in stems, leaves, shoots, and roots, with a higher expression in siliques and apical shoots.

It is found in the membrane. It carries out the reaction a C27-steroid + reduced [NADPH--hemoprotein reductase] + O2 = a (22S)-22-hydroxy C27-steroid + oxidized [NADPH--hemoprotein reductase] + H2O + H(+). The enzyme catalyses a C28-steroid + reduced [NADPH--hemoprotein reductase] + O2 = a (22S)-22-hydroxy C28-steroid + oxidized [NADPH--hemoprotein reductase] + H2O + H(+). The catalysed reaction is a C29-steroid + reduced [NADPH--hemoprotein reductase] + O2 = a (22S)-22-hydroxy C29-steroid + oxidized [NADPH--hemoprotein reductase] + H2O + H(+). It catalyses the reaction cholesterol + reduced [NADPH--hemoprotein reductase] + O2 = (22S)-22-hydroxycholesterol + oxidized [NADPH--hemoprotein reductase] + H2O + H(+). It carries out the reaction cholestanol + reduced [NADPH--hemoprotein reductase] + O2 = (22S)-22-hydroxycholestanol + oxidized [NADPH--hemoprotein reductase] + H2O + H(+). The enzyme catalyses campestanol + reduced [NADPH--hemoprotein reductase] + O2 = 6-deoxycathasterone + oxidized [NADPH--hemoprotein reductase] + H2O + H(+). The catalysed reaction is campesterol + reduced [NADPH--hemoprotein reductase] + O2 = (22S)-22-hydroxycampesterol + oxidized [NADPH--hemoprotein reductase] + H2O + H(+). It catalyses the reaction 6-oxocampestanol + reduced [NADPH--hemoprotein reductase] + O2 = cathasterone + oxidized [NADPH--hemoprotein reductase] + H2O + H(+). It carries out the reaction sitosterol + reduced [NADPH--hemoprotein reductase] + O2 = (22S)-22-hydroxysitosterol + oxidized [NADPH--hemoprotein reductase] + H2O + H(+). The protein operates within plant hormone biosynthesis; brassinosteroid biosynthesis. Catalyzes the C22-alpha-hydroxylation step in brassinosteroids biosynthesis. Converts campesterol (CR) to (22S)-22-hydroxycampesterol (22-OHCR, 22-hydroxyCR), campestanol (CN) to 6-deoxycathasterone (6-deoxoCT), and 6-oxocampestanol (6-oxoCN) to cathasterone (CT). Can also use cholesterol and cholestanol as substrates. This chain is Steroid (22S)-hydroxylase, found in Arabidopsis thaliana (Mouse-ear cress).